Reading from the N-terminus, the 122-residue chain is Putative cryptic phosphonate transport system permease protein PhnE2 (122 aa).

An ABC transmembrane type-1 domain is found at 1 to 114 (MLALFIHTTG…VTVSLLDFLS (114 aa)). A run of 4 helical transmembrane segments spans residues 3–23 (ALFIHTTGVLSKLLSEAVEAI), 39–59 (LEEILYGVLPQVMPLLISYSL), 68–88 (SATVVGMVGAGGIGVTLWEAI), and 93–113 (FQQTCALMVLIIVTVSLLDFL).

The protein belongs to the binding-protein-dependent transport system permease family. In terms of assembly, if the reading frame is restored, the complex is composed of two ATP-binding proteins (PhnC), two transmembrane proteins (PhnE) and a solute-binding protein (PhnD).

Its subcellular location is the cell inner membrane. In terms of biological role, C-terminal fragment of the PhnE protein, part of a phosphonate usage operon that is cryptic in K12 strains. Growth of K12 strains on phosphonate can be observed when it is used as the sole phosphorus source after a 60 hour lag period, suggesting the operon is activated. An intact PhnE in strain B is (AC A0A140NFA3). Part of the binding-protein-dependent transport system for phosphonates; probably responsible for the translocation of the substrate across the membrane. The chain is Putative cryptic phosphonate transport system permease protein PhnE2 (phnE) from Escherichia coli (strain K12).